A 249-amino-acid chain; its full sequence is MSELTVVKFGGSLTENPQAQNKFLEELTLISKRQNIILVHGGGPEINALLEKFAITSRFVNGLRFTDADTLGVVELALSGKVNRVLTTGLIKNGANAVGISGKDGKSVICRQVEYLGFVGEPVKVNRKLIDILIKSRFLPVIASIAADVEGNIMNVNADTLAASIAVAFKAQKLIFLTDVAGVFDKNNNIIKEIKIKEINSLIEDKTITGGMIPKIKGCAESVKKGLKEVWIAEGISGIQKIKGTVIKK.

Residues 42 to 43 (GG), R64, and N155 each bind substrate.

Belongs to the acetylglutamate kinase family. ArgB subfamily.

It localises to the cytoplasm. It catalyses the reaction N-acetyl-L-glutamate + ATP = N-acetyl-L-glutamyl 5-phosphate + ADP. It participates in amino-acid biosynthesis; L-arginine biosynthesis; N(2)-acetyl-L-ornithine from L-glutamate: step 2/4. Functionally, catalyzes the ATP-dependent phosphorylation of N-acetyl-L-glutamate. This is Acetylglutamate kinase from Endomicrobium trichonymphae.